We begin with the raw amino-acid sequence, 281 residues long: Cytochrome c oxidase subunit 3 (281 aa).

Residues 1–15 lie on the Mitochondrial matrix side of the membrane; the sequence is MTHQTHAYHMVNPSP. The helical transmembrane segment at 16–34 threads the bilayer; that stretch reads WPLTGALSALLLTSGLIMW. The Mitochondrial intermembrane portion of the chain corresponds to 35 to 40; the sequence is FHYNSS. A helical membrane pass occupies residues 41-66; sequence TLMFMGLTTMLLTMYQWWRDIIREGT. The Mitochondrial matrix segment spans residues 67–72; that stretch reads FQGHHT. A helical transmembrane segment spans residues 73–105; the sequence is PVVQKGLRYGMILFILSEVFFFIGFFWAFYHSS. Residues 106–128 lie on the Mitochondrial intermembrane side of the membrane; sequence LAPTPELGGCWPPTGIHPLNPLE. The helical transmembrane segment at 129-152 threads the bilayer; it reads VPLLNTSILLASGVSITWAHHSLM. Topologically, residues 153 to 155 are mitochondrial matrix; it reads EGN. A helical transmembrane segment spans residues 156–183; the sequence is RKQMIQALLITISLGLYFTILQAMEYYE. The Mitochondrial intermembrane segment spans residues 184–190; sequence ASFTISD. Residues 191-223 traverse the membrane as a helical segment; the sequence is GVYGSTFFVATGFHGLHVIIGSTFLIVCLLRQL. Residues 224–232 are Mitochondrial matrix-facing; it reads FYHFTSTHH. The chain crosses the membrane as a helical span at residues 233–256; the sequence is FGFEAAAWYWHFVDVVWLFLYVSI. Over 257 to 281 the chain is Mitochondrial intermembrane; it reads YWWGSYFSSMISTTDFQSLSSGSNQ.

It belongs to the cytochrome c oxidase subunit 3 family. As to quaternary structure, component of the cytochrome c oxidase (complex IV, CIV), a multisubunit enzyme composed of 14 subunits. The complex is composed of a catalytic core of 3 subunits MT-CO1, MT-CO2 and MT-CO3, encoded in the mitochondrial DNA, and 11 supernumerary subunits COX4I, COX5A, COX5B, COX6A, COX6B, COX6C, COX7A, COX7B, COX7C, COX8 and NDUFA4, which are encoded in the nuclear genome. The complex exists as a monomer or a dimer and forms supercomplexes (SCs) in the inner mitochondrial membrane with NADH-ubiquinone oxidoreductase (complex I, CI) and ubiquinol-cytochrome c oxidoreductase (cytochrome b-c1 complex, complex III, CIII), resulting in different assemblies (supercomplex SCI(1)III(2)IV(1) and megacomplex MCI(2)III(2)IV(2)).

The protein localises to the mitochondrion inner membrane. The enzyme catalyses 4 Fe(II)-[cytochrome c] + O2 + 8 H(+)(in) = 4 Fe(III)-[cytochrome c] + 2 H2O + 4 H(+)(out). Its function is as follows. Component of the cytochrome c oxidase, the last enzyme in the mitochondrial electron transport chain which drives oxidative phosphorylation. The respiratory chain contains 3 multisubunit complexes succinate dehydrogenase (complex II, CII), ubiquinol-cytochrome c oxidoreductase (cytochrome b-c1 complex, complex III, CIII) and cytochrome c oxidase (complex IV, CIV), that cooperate to transfer electrons derived from NADH and succinate to molecular oxygen, creating an electrochemical gradient over the inner membrane that drives transmembrane transport and the ATP synthase. Cytochrome c oxidase is the component of the respiratory chain that catalyzes the reduction of oxygen to water. Electrons originating from reduced cytochrome c in the intermembrane space (IMS) are transferred via the dinuclear copper A center (CU(A)) of subunit 2 and heme A of subunit 1 to the active site in subunit 1, a binuclear center (BNC) formed by heme A3 and copper B (CU(B)). The BNC reduces molecular oxygen to 2 water molecules using 4 electrons from cytochrome c in the IMS and 4 protons from the mitochondrial matrix. In Didelphis virginiana (North American opossum), this protein is Cytochrome c oxidase subunit 3 (MT-CO3).